Consider the following 201-residue polypeptide: MSYIPYVVEQTSRGERTYDIYSRLLKDRIIFLGTEVNDVVANSIIAQLLFLESDDPEKDINFYINSPGGSVTAGMAIYDTMAYIKPEITTVCIGQAASMGAVLLAAGNHGKRYSLPNARILIHQPMGGFQGQASDIAIQAQEILRMKEALNEILASHTGKPLKQVQQDTDRDYFMSPLEAKEYGLIDHVILNREDLDSIEE.

The active-site Nucleophile is serine 98. The active site involves histidine 123.

The protein belongs to the peptidase S14 family. Fourteen ClpP subunits assemble into 2 heptameric rings which stack back to back to give a disk-like structure with a central cavity, resembling the structure of eukaryotic proteasomes.

It is found in the cytoplasm. It catalyses the reaction Hydrolysis of proteins to small peptides in the presence of ATP and magnesium. alpha-casein is the usual test substrate. In the absence of ATP, only oligopeptides shorter than five residues are hydrolyzed (such as succinyl-Leu-Tyr-|-NHMec, and Leu-Tyr-Leu-|-Tyr-Trp, in which cleavage of the -Tyr-|-Leu- and -Tyr-|-Trp bonds also occurs).. Cleaves peptides in various proteins in a process that requires ATP hydrolysis. Has a chymotrypsin-like activity. Plays a major role in the degradation of misfolded proteins. The protein is ATP-dependent Clp protease proteolytic subunit of Desulfatibacillum aliphaticivorans.